The chain runs to 458 residues: MTSSLSVIILAAGKGTRMQSAKPKVLQTLAGKSLLGHVLDTCHQLTVDDTIIVHGFGGEQVQDHIDQQYAHLPITWVAQTEQLGTGHAVKVTLSELPKDGQSLILYGDVPLVSCQTLATLQDANTDGMSMLTLTVDNPFGLGRIKRDKDGNIEAIIEQKDANSDEQQIQEINSGIYCVDNALLHKFLPKLSNDNAQQEYYLTDIVKMAVADGITIAAIEPEHTFEIEGVNNRQQLASLERTWQGKLVADLQEAGVQFADPTRVDIRGTLSAGQDVFVDVGVVFEGDCVLGDNVYIEAGCVIKNAQIGNACHIKPYCVIDSAEVGAGVDIGPFAHLRPETILSDNSKVGNFVEIKKSTIGDGSKVNHLSYIGDATIGTGVNVGAGVITCNYDGVNKSQTIIDDNAFIGSNSSLVAPVKIGDTATVAAGSVITKNVDAHALAFGRARQTQKNDFKRPTKK.

A pyrophosphorylase region spans residues 1 to 232 (MTSSLSVIIL…TFEIEGVNNR (232 aa)). UDP-N-acetyl-alpha-D-glucosamine contacts are provided by residues 10 to 13 (LAAG), Lys-24, Gln-79, 84 to 85 (GT), 106 to 108 (YGD), Gly-142, Glu-157, Asn-172, and Asn-230. Residue Asp-108 coordinates Mg(2+). Asn-230 contributes to the Mg(2+) binding site. A linker region spans residues 233–253 (QQLASLERTWQGKLVADLQEA). An N-acetyltransferase region spans residues 254–458 (GVQFADPTRV…KNDFKRPTKK (205 aa)). 2 residues coordinate UDP-N-acetyl-alpha-D-glucosamine: Arg-336 and Lys-354. Residue His-366 is the Proton acceptor of the active site. UDP-N-acetyl-alpha-D-glucosamine contacts are provided by Tyr-369 and Asn-380. Acetyl-CoA is bound by residues Ala-383, 389–390 (NY), Ser-408, Ala-426, and Arg-443.

In the N-terminal section; belongs to the N-acetylglucosamine-1-phosphate uridyltransferase family. It in the C-terminal section; belongs to the transferase hexapeptide repeat family. Homotrimer. Mg(2+) is required as a cofactor.

The protein localises to the cytoplasm. It carries out the reaction alpha-D-glucosamine 1-phosphate + acetyl-CoA = N-acetyl-alpha-D-glucosamine 1-phosphate + CoA + H(+). It catalyses the reaction N-acetyl-alpha-D-glucosamine 1-phosphate + UTP + H(+) = UDP-N-acetyl-alpha-D-glucosamine + diphosphate. Its pathway is nucleotide-sugar biosynthesis; UDP-N-acetyl-alpha-D-glucosamine biosynthesis; N-acetyl-alpha-D-glucosamine 1-phosphate from alpha-D-glucosamine 6-phosphate (route II): step 2/2. It participates in nucleotide-sugar biosynthesis; UDP-N-acetyl-alpha-D-glucosamine biosynthesis; UDP-N-acetyl-alpha-D-glucosamine from N-acetyl-alpha-D-glucosamine 1-phosphate: step 1/1. The protein operates within bacterial outer membrane biogenesis; LPS lipid A biosynthesis. Catalyzes the last two sequential reactions in the de novo biosynthetic pathway for UDP-N-acetylglucosamine (UDP-GlcNAc). The C-terminal domain catalyzes the transfer of acetyl group from acetyl coenzyme A to glucosamine-1-phosphate (GlcN-1-P) to produce N-acetylglucosamine-1-phosphate (GlcNAc-1-P), which is converted into UDP-GlcNAc by the transfer of uridine 5-monophosphate (from uridine 5-triphosphate), a reaction catalyzed by the N-terminal domain. The polypeptide is Bifunctional protein GlmU (Psychrobacter cryohalolentis (strain ATCC BAA-1226 / DSM 17306 / VKM B-2378 / K5)).